A 117-amino-acid chain; its full sequence is Large ribosomal subunit protein uL18 (117 aa).

Belongs to the universal ribosomal protein uL18 family. As to quaternary structure, part of the 50S ribosomal subunit; part of the 5S rRNA/L5/L18/L25 subcomplex. Contacts the 5S and 23S rRNAs.

In terms of biological role, this is one of the proteins that bind and probably mediate the attachment of the 5S RNA into the large ribosomal subunit, where it forms part of the central protuberance. The polypeptide is Large ribosomal subunit protein uL18 (Proteus mirabilis (strain HI4320)).